The sequence spans 201 residues: dCTP deaminase, dUMP-forming (201 aa).

DCTP contacts are provided by residues 101 to 106 (KSSLGR), Asp-119, 127 to 129 (TLE), Gln-148, Tyr-162, and Gln-174. The Proton donor/acceptor role is filled by Glu-129.

The protein belongs to the dCTP deaminase family. In terms of assembly, homotrimer.

It carries out the reaction dCTP + 2 H2O = dUMP + NH4(+) + diphosphate. The protein operates within pyrimidine metabolism; dUMP biosynthesis; dUMP from dCTP: step 1/1. Bifunctional enzyme that catalyzes both the deamination of dCTP to dUTP and the hydrolysis of dUTP to dUMP without releasing the toxic dUTP intermediate. This Parafrankia sp. (strain EAN1pec) protein is dCTP deaminase, dUMP-forming.